Consider the following 522-residue polypeptide: Kelch domain-containing protein 4 (522 aa).

The span at 1–10 (MGKKGKKEKK) shows a compositional bias: basic residues. Residues 1–33 (MGKKGKKEKKGRGAEKTAAKMEKKVSKRSRKEE) form a disordered region. Residues 11–24 (GRGAEKTAAKMEKK) show a composition bias toward basic and acidic residues. 5 Kelch repeats span residues 77–129 (ELIL…VVPQ), 133–187 (QLWV…AWKR), 188–241 (QLIL…VTPQ), 243–289 (GIII…MNPS), and 308–361 (QTLF…RRGR). Disordered regions lie at residues 346–378 (QLKGPKSEKKKRRRGRKEESEGGSKLACGGAGT), 402–432 (LAAPGSAGQPRSEDEDSPEEAGSSAPGPCPR), and 481–522 (DPET…GAED). 2 positions are modified to phosphoserine: Ser413 and Ser418. Residues 443 to 494 (VLYVYGGMFEAGDRQVTLSDLHCLDLHRMEAWKALVEMDPETQEWLEETDSE) form a Kelch 6 repeat.

This Pongo abelii (Sumatran orangutan) protein is Kelch domain-containing protein 4 (KLHDC4).